The primary structure comprises 337 residues: MVVKVGINGFGRIGRLALRRIQEVEGVEVAHINDLTDPAMLAHLLKYDTTQGRFKGTVEVKEDGFDVNGKFVKVTAERNPEDIQWADSGVEIVLEATGFFATKEKAEKHLHPGGAKKVLITAPGGNDVKTVVFNTNHTILDGTETVISAGSCTTNSLAPMADALNKNFGVKGGTMTTVHSYTGDQMTLDGPHRGGDFRRARAAAENIVPASSGAAKAIGLVLPELSGLMKGHAQRVSTPTGSITELVTVLEKHVTVDEINEAMKAAADESFGYNVDEIVSSDIIGMAYGSLFDATLTEVTDLKDGGQLVKTAAWYDNEMSFTAQLIRTLEYFAKIAK.

Residues 12–13, aspartate 34, arginine 78, and threonine 121 contribute to the NAD(+) site; that span reads RI. D-glyceraldehyde 3-phosphate contacts are provided by residues 151-153, threonine 182, arginine 199, 212-213, and arginine 235; these read SCT and SG. The active-site Nucleophile is cysteine 152. Position 317 (asparagine 317) interacts with NAD(+).

Belongs to the glyceraldehyde-3-phosphate dehydrogenase family. In terms of assembly, homotetramer.

The protein localises to the cytoplasm. It carries out the reaction D-glyceraldehyde 3-phosphate + phosphate + NAD(+) = (2R)-3-phospho-glyceroyl phosphate + NADH + H(+). Its pathway is carbohydrate degradation; glycolysis; pyruvate from D-glyceraldehyde 3-phosphate: step 1/5. Functionally, catalyzes the oxidative phosphorylation of glyceraldehyde 3-phosphate (G3P) to 1,3-bisphosphoglycerate (BPG) using the cofactor NAD. The first reaction step involves the formation of a hemiacetal intermediate between G3P and a cysteine residue, and this hemiacetal intermediate is then oxidized to a thioester, with concomitant reduction of NAD to NADH. The reduced NADH is then exchanged with the second NAD, and the thioester is attacked by a nucleophilic inorganic phosphate to produce BPG. This chain is Glyceraldehyde-3-phosphate dehydrogenase (gap), found in Lactococcus lactis subsp. lactis (strain IL1403) (Streptococcus lactis).